Here is a 354-residue protein sequence, read N- to C-terminus: Phosphate acyltransferase (354 aa).

Belongs to the PlsX family. In terms of assembly, homodimer. Probably interacts with PlsY.

It is found in the cytoplasm. It catalyses the reaction a fatty acyl-[ACP] + phosphate = an acyl phosphate + holo-[ACP]. The protein operates within lipid metabolism; phospholipid metabolism. In terms of biological role, catalyzes the reversible formation of acyl-phosphate (acyl-PO(4)) from acyl-[acyl-carrier-protein] (acyl-ACP). This enzyme utilizes acyl-ACP as fatty acyl donor, but not acyl-CoA. This Ralstonia nicotianae (strain ATCC BAA-1114 / GMI1000) (Ralstonia solanacearum) protein is Phosphate acyltransferase.